The sequence spans 498 residues: Cytochrome P450 monooxygenase astB (498 aa).

A helical transmembrane segment spans residues 7 to 27 (FTTMPVVLLVGLVLYQLLAFT). Residues Asn-237, Asn-248, and Asn-346 are each glycosylated (N-linked (GlcNAc...) asparagine). Cys-425 lines the heme pocket.

This sequence belongs to the cytochrome P450 family. Heme is required as a cofactor.

It is found in the membrane. It catalyses the reaction preasperterpenoid A + 4 reduced [NADPH--hemoprotein reductase] + 4 O2 = asperterpenoid A + 4 oxidized [NADPH--hemoprotein reductase] + 5 H2O + 5 H(+). The enzyme catalyses asperterpenoid A + 2 reduced [NADPH--hemoprotein reductase] + 2 O2 = asperterpenoid B + 2 oxidized [NADPH--hemoprotein reductase] + 3 H2O + 3 H(+). The protein operates within secondary metabolite biosynthesis; terpenoid biosynthesis. Its function is as follows. Cytochrome P450 monooxygenase; part of the gene cluster that mediates the biosynthesis of the asperterpenoids, sesterterpenes that exhibit anti-tuberculosis activity. The first step of the pathway is performed by the sesterterpene synthase astC that possesses both prenyl transferase and terpene cyclase activity, converting isopentenyl diphosphate and dimethylallyl diphosphate into geranylfarnesyl diphosphate (GFPP) and further converting GFPP into preasperterpenoid A, respectively. The cytochrome P450 monooxygenase astB then dually oxidizes preasperterpenoid A to produce asperterpenoid A along with a minor product, asperterpenoid B. Finally, the cytochrome P450 monooxygenase astA converts asperterpenoid A into asperterpenoid C. The protein is Cytochrome P450 monooxygenase astB of Talaromyces wortmannii (Penicillium wortmannii).